We begin with the raw amino-acid sequence, 446 residues long: Chromosomal replication initiator protein DnaA (446 aa).

The interval 1 to 92 (MENISDLWNS…SQAEEEIDLP (92 aa)) is domain I, interacts with DnaA modulators. The segment at 93 to 109 (PSKPNAAQDDSNHLPQS) is domain II. The domain III, AAA+ region stretch occupies residues 110 to 326 (MLNPKYTFDT…GALIRVVAYS (217 aa)). Positions 154, 156, 157, and 158 each coordinate ATP. The interval 327–446 (SLINKDINAD…QVEEINDILK (120 aa)) is domain IV, binds dsDNA.

The protein belongs to the DnaA family. As to quaternary structure, oligomerizes as a right-handed, spiral filament on DNA at oriC.

The protein localises to the cytoplasm. Its function is as follows. Plays an essential role in the initiation and regulation of chromosomal replication. ATP-DnaA binds to the origin of replication (oriC) to initiate formation of the DNA replication initiation complex once per cell cycle. Binds the DnaA box (a 9 base pair repeat at the origin) and separates the double-stranded (ds)DNA. Forms a right-handed helical filament on oriC DNA; dsDNA binds to the exterior of the filament while single-stranded (ss)DNA is stabiized in the filament's interior. The ATP-DnaA-oriC complex binds and stabilizes one strand of the AT-rich DNA unwinding element (DUE), permitting loading of DNA polymerase. After initiation quickly degrades to an ADP-DnaA complex that is not apt for DNA replication. Binds acidic phospholipids. The protein is Chromosomal replication initiator protein DnaA of Bacillus cereus (strain 03BB102).